The following is a 285-amino-acid chain: 2-dehydro-3-deoxyphosphooctonate aldolase (285 aa).

It belongs to the KdsA family.

The protein localises to the cytoplasm. The catalysed reaction is D-arabinose 5-phosphate + phosphoenolpyruvate + H2O = 3-deoxy-alpha-D-manno-2-octulosonate-8-phosphate + phosphate. It functions in the pathway carbohydrate biosynthesis; 3-deoxy-D-manno-octulosonate biosynthesis; 3-deoxy-D-manno-octulosonate from D-ribulose 5-phosphate: step 2/3. The protein operates within bacterial outer membrane biogenesis; lipopolysaccharide biosynthesis. This Delftia acidovorans (strain DSM 14801 / SPH-1) protein is 2-dehydro-3-deoxyphosphooctonate aldolase.